We begin with the raw amino-acid sequence, 148 residues long: MSTSSARPAVLALAGLALLLLLCLGPDGISGNKLKKMLQKREGPVPSKTNVAVAENTAKEFLGGLKRAKRQLWDRTRPEVQQWYQQFLYMGFDEAKFEDDVNYWLNRNRNGHDYYGDYYQRHYDEDAAIGPHSRESFRHGASVNYNDY.

Residues 1–31 (MSTSSARPAVLALAGLALLLLLCLGPDGISG) form the signal peptide. 2 propeptides span residues 32–70 (NKLK…RAKR) and 133–148 (SRES…YNDY).

Belongs to the augurin family. As to expression, expressed in the intermediate lobe of pituitary, glomerular layer of adrenal cortex, choroid plexus and atrioventricular node of the heart. Expressed in the brain with high expression in the choroid plexus and the epithelial lining of the central canal and expression in the gray matter of the spinal cord (at protein level).

The protein resides in the secreted. Its subcellular location is the cytoplasm. The protein localises to the apical cell membrane. Its function is as follows. Probable hormone that may attenuate cell proliferation and induce senescence of oligodendrocyte and neural precursor cells in the central nervous system. ECRG4-induced senescence is characterized by G1 arrest, RB1 dephosphorylation and accelerated CCND1 and CCND3 proteasomal degradation. The polypeptide is Augurin (Mus musculus (Mouse)).